We begin with the raw amino-acid sequence, 128 residues long: Aspartate 1-decarboxylase (128 aa).

Ser-25 functions as the Schiff-base intermediate with substrate; via pyruvic acid in the catalytic mechanism. Position 25 is a pyruvic acid (Ser) (Ser-25). Thr-57 provides a ligand contact to substrate. Tyr-58 functions as the Proton donor in the catalytic mechanism. 73-75 provides a ligand contact to substrate; sequence GAA.

This sequence belongs to the PanD family. As to quaternary structure, heterooctamer of four alpha and four beta subunits. Pyruvate is required as a cofactor. Is synthesized initially as an inactive proenzyme, which is activated by self-cleavage at a specific serine bond to produce a beta-subunit with a hydroxyl group at its C-terminus and an alpha-subunit with a pyruvoyl group at its N-terminus.

It localises to the cytoplasm. The enzyme catalyses L-aspartate + H(+) = beta-alanine + CO2. It participates in cofactor biosynthesis; (R)-pantothenate biosynthesis; beta-alanine from L-aspartate: step 1/1. Catalyzes the pyruvoyl-dependent decarboxylation of aspartate to produce beta-alanine. This chain is Aspartate 1-decarboxylase, found in Staphylococcus epidermidis (strain ATCC 35984 / DSM 28319 / BCRC 17069 / CCUG 31568 / BM 3577 / RP62A).